Reading from the N-terminus, the 417-residue chain is Solanesyl diphosphate synthase 2, chloroplastic (417 aa).

A chloroplast-targeting transit peptide spans 1–60; that stretch reads MMMSCRNIDLGTSVLDHSCSSSSTSRRFLFGNSSKTVCMIGGRSCVGNLVFLRRDLATCR. Residues Lys-137, Arg-140, and His-175 each coordinate isopentenyl diphosphate. Positions 182 and 186 each coordinate Mg(2+). An all-trans-polyprenyl diphosphate is bound at residue Arg-191. Position 192 (Arg-192) interacts with isopentenyl diphosphate. An all-trans-polyprenyl diphosphate-binding residues include Lys-268, Thr-269, Gln-306, and Lys-323.

The protein belongs to the FPP/GGPP synthase family. Homodimer. Interacts with FBN5. Mg(2+) serves as cofactor. Higher expression in leaves than in roots.

It localises to the plastid. It is found in the chloroplast. The catalysed reaction is 5 isopentenyl diphosphate + (2E,6E,10E)-geranylgeranyl diphosphate = all-trans-nonaprenyl diphosphate + 5 diphosphate. Its function is as follows. Involved in providing solanesyl diphosphate for plastoquinone-9 (PQ-9) formation in plastids. Catalyzes the elongation of the prenyl side chain of PQ-9 in plastids. Contributes to the biosynthesis of plastochromanol-8 (PC-8) in plastids. Does not contribute to the synthesis of tocopherol or ubiquinone. PQ-9 and PC-8 are lipophilic antioxidants that act as protectant against photooxidative stress under high light stress conditions. Prefers geranylgeranyl diphosphate to farnesyl diphosphate as substrate. No activity with geranyl diphosphate or dimethylallyl diphosphate as substrate. This Arabidopsis thaliana (Mouse-ear cress) protein is Solanesyl diphosphate synthase 2, chloroplastic.